The following is a 455-amino-acid chain: Epoxide hydrolase 1 (455 aa).

Residues 1-21 (MLLELLLASVLGFVIYWFVSG) form a helical; Signal-anchor for type III membrane protein membrane-spanning segment. Over 22–455 (DKEESLPLED…CKFVGLVERQ (434 aa)) the chain is Cytoplasmic. Asp-226 serves as the catalytic Nucleophile. Arg-295 is modified (dimethylated arginine). The active-site Proton donor is the Tyr-374. Catalysis depends on His-431, which acts as the Proton acceptor.

This sequence belongs to the peptidase S33 family.

The protein localises to the microsome membrane. It is found in the endoplasmic reticulum membrane. It catalyses the reaction cis-stilbene oxide + H2O = (1R,2R)-hydrobenzoin. The catalysed reaction is 1-(4-methoxyphenyl)-N-methyl-N-[(3-methyloxetan-3-yl)methyl]methanamine + H2O = 2-{[(4-methoxybenzyl)(methyl)amino]methyl}-2-methylpropane-1,3-diol. It carries out the reaction 8,9-epoxy-(5Z,11Z,14Z)-eicosatrienoate + H2O = 8,9-dihydroxy-(5Z,11Z,14Z)-eicosatrienoate. The enzyme catalyses 11,12-epoxy-(5Z,8Z,14Z)-eicosatrienoate + H2O = 11,12-dihydroxy-(5Z,8Z,14Z)-eicosatrienoate. It catalyses the reaction 2-(5Z,8Z,11Z,14Z-eicosatetraenoyl)-glycerol + H2O = glycerol + (5Z,8Z,11Z,14Z)-eicosatetraenoate + H(+). Its activity is regulated as follows. Inhibited by 10-hydroxystearamide and methoxy-arachidonyl fluorophosphate. In terms of biological role, biotransformation enzyme that catalyzes the hydrolysis of arene and aliphatic epoxides to less reactive and more water soluble dihydrodiols by the trans addition of water. May play a role in the metabolism of endogenous lipids such as epoxide-containing fatty acids. Metabolizes the abundant endocannabinoid 2-arachidonoylglycerol (2-AG) to free arachidonic acid (AA) and glycerol. Binds 20(S)-hydroxycholesterol (20(S)-OHC). This is Epoxide hydrolase 1 (EPHX1) from Oryctolagus cuniculus (Rabbit).